Here is a 355-residue protein sequence, read N- to C-terminus: Putative arylamide transporter (355 aa).

The next 6 membrane-spanning stretches (helical) occupy residues 22-42 (TVLW…YLTH), 44-64 (VFNH…MSAT), 71-91 (RAQQ…GVHA), 92-112 (LLGS…SVAV), 119-139 (VAQG…VLVF), and 150-170 (LFDA…LFPP).

It localises to the cell membrane. Functionally, may be involved in the import of arylamide compounds. This chain is Putative arylamide transporter, found in Mycobacterium bovis (strain ATCC BAA-935 / AF2122/97).